A 165-amino-acid polypeptide reads, in one-letter code: 2-C-methyl-D-erythritol 2,4-cyclodiphosphate synthase (165 aa).

Asp-12 and His-14 together coordinate a divalent metal cation. 4-CDP-2-C-methyl-D-erythritol 2-phosphate is bound by residues 12–14 (DVH) and 38–39 (HS). His-46 contacts a divalent metal cation. Residues 60 to 62 (DIG), 65 to 69 (FPDTD), Phe-143, and Arg-146 each bind 4-CDP-2-C-methyl-D-erythritol 2-phosphate.

Belongs to the IspF family. In terms of assembly, homotrimer. A divalent metal cation is required as a cofactor.

It catalyses the reaction 4-CDP-2-C-methyl-D-erythritol 2-phosphate = 2-C-methyl-D-erythritol 2,4-cyclic diphosphate + CMP. The protein operates within isoprenoid biosynthesis; isopentenyl diphosphate biosynthesis via DXP pathway; isopentenyl diphosphate from 1-deoxy-D-xylulose 5-phosphate: step 4/6. Functionally, involved in the biosynthesis of isopentenyl diphosphate (IPP) and dimethylallyl diphosphate (DMAPP), two major building blocks of isoprenoid compounds. Catalyzes the conversion of 4-diphosphocytidyl-2-C-methyl-D-erythritol 2-phosphate (CDP-ME2P) to 2-C-methyl-D-erythritol 2,4-cyclodiphosphate (ME-CPP) with a corresponding release of cytidine 5-monophosphate (CMP). This chain is 2-C-methyl-D-erythritol 2,4-cyclodiphosphate synthase, found in Aromatoleum aromaticum (strain DSM 19018 / LMG 30748 / EbN1) (Azoarcus sp. (strain EbN1)).